Reading from the N-terminus, the 433-residue chain is 3-phosphoshikimate 1-carboxyvinyltransferase (433 aa).

Residues Lys22, Ser23, and Arg27 each coordinate 3-phosphoshikimate. A phosphoenolpyruvate-binding site is contributed by Lys22. Phosphoenolpyruvate-binding residues include Gly96 and Arg130. 3-phosphoshikimate is bound by residues Ser176, Ser177, Gln178, Ser204, Asp319, Asn342, and Lys346. Gln178 lines the phosphoenolpyruvate pocket. Asp319 functions as the Proton acceptor in the catalytic mechanism. Phosphoenolpyruvate is bound by residues Arg350, Arg394, and Lys419.

This sequence belongs to the EPSP synthase family. Monomer.

It localises to the cytoplasm. It catalyses the reaction 3-phosphoshikimate + phosphoenolpyruvate = 5-O-(1-carboxyvinyl)-3-phosphoshikimate + phosphate. It participates in metabolic intermediate biosynthesis; chorismate biosynthesis; chorismate from D-erythrose 4-phosphate and phosphoenolpyruvate: step 6/7. Its function is as follows. Catalyzes the transfer of the enolpyruvyl moiety of phosphoenolpyruvate (PEP) to the 5-hydroxyl of shikimate-3-phosphate (S3P) to produce enolpyruvyl shikimate-3-phosphate and inorganic phosphate. In Actinobacillus succinogenes (strain ATCC 55618 / DSM 22257 / CCUG 43843 / 130Z), this protein is 3-phosphoshikimate 1-carboxyvinyltransferase.